A 254-amino-acid chain; its full sequence is Uracil-DNA glycosylase (254 aa).

D91 serves as the catalytic Proton acceptor.

Belongs to the uracil-DNA glycosylase (UDG) superfamily. UNG family.

Its subcellular location is the host nucleus. The catalysed reaction is Hydrolyzes single-stranded DNA or mismatched double-stranded DNA and polynucleotides, releasing free uracil.. Excises uracil residues from the DNA which can arise as a result of misincorporation of dUMP residues by DNA polymerase or deamination of cytosines. Therefore may reduce deleterious uracil incorporation into the viral genome, particularly in terminally differentiated cells which lack DNA repair enzymes. The protein is Uracil-DNA glycosylase (U81) of Homo sapiens (Human).